Here is a 106-residue protein sequence, read N- to C-terminus: L-rhamnose mutarotase (106 aa).

Residue tyrosine 20 coordinates substrate. The Proton donor role is filled by histidine 24. Substrate is bound by residues tyrosine 43 and 78–79 (WW).

This sequence belongs to the rhamnose mutarotase family. Homodimer.

It localises to the cytoplasm. The enzyme catalyses alpha-L-rhamnose = beta-L-rhamnose. It functions in the pathway carbohydrate metabolism; L-rhamnose metabolism. Its function is as follows. Involved in the anomeric conversion of L-rhamnose. The polypeptide is L-rhamnose mutarotase (Rhizobium etli (strain ATCC 51251 / DSM 11541 / JCM 21823 / NBRC 15573 / CFN 42)).